The following is a 752-amino-acid chain: MALLAIHSWRWAAAAVAFEKHKHSAVLTRSLVSICGSGLRWSSYQSGASGSARLSQTTESLRNSTQQRWEKNNSRQLLDASKVLQAWPLIEKRTCWHGHAGGGLHTDPKEGLKDVDTRKIIKAMLSYVWPKDRPDLRARVAISLGFLGGAKAMNIVVPFMFKYAVDSLNQMSGNMLNLSDAPNTVATMATAVLIGYGVSRAGAAFFNEVRNAVFGKVAQNSIRRIAKNVFLHLHNLDLGFHLSRQTGALSKAIDRGTRGISFVLSALVFNLLPIVFEMTLVSSVLYYKCGAQFALVTLGTLGAYTAFTVAVTRWRTRFRIEMNKADNDAGNAAIDSLLNYETVKYFNNEKYEAQRYDGFLKTYETASLKSTSTLAMLNFGQSAIFSVGLTAIMVLASQGIVAGALTVGDLVMVNGLLFQLSLPLNFLGTVYRETRQALIDMNTLFTLLKVDTRIKDKAMASPLQITPQTATVAFDNVHFEYIEGQKVLSGVSFEVPAGKKVAIVGGSGSGKSTIVRLLFRFYEPQKGSIYLAGQNIQDVSLESLRRAVGVVPQDAVLFHNTIYYNLLYGNINASPEEVYAVAKLAGLHDAILRMPHGYDTQVGERGLKLSGGEKQRVAIARAILKDPPVILYDEATSSLDSITEETILGAMRDVVKHRTSIFIAHRLSTVVDADEIIVLSQGKVAERGTHYGLLANSSSIYSEMWHTQSTRIQNHDNLGWDAKKESLSKEEERKKLQEEIVNSVKGCGNCSC.

The transit peptide at 1-22 (MALLAIHSWRWAAAAVAFEKHK) directs the protein to the mitochondrion. The Mitochondrial matrix portion of the chain corresponds to 23-140 (HSAVLTRSLV…KDRPDLRARV (118 aa)). The ABC transmembrane type-1 domain maps to 140 to 436 (VAISLGFLGG…LGTVYRETRQ (297 aa)). The chain crosses the membrane as a helical span at residues 141 to 161 (AISLGFLGGAKAMNIVVPFMF). The Mitochondrial intermembrane segment spans residues 162 to 185 (KYAVDSLNQMSGNMLNLSDAPNTV). Residues 186-206 (ATMATAVLIGYGVSRAGAAFF) traverse the membrane as a helical segment. Topologically, residues 207 to 259 (NEVRNAVFGKVAQNSIRRIAKNVFLHLHNLDLGFHLSRQTGALSKAIDRGTRG) are mitochondrial matrix. 2 positions are modified to N6-acetyllysine: Lys216 and Lys251. The chain crosses the membrane as a helical span at residues 260-280 (ISFVLSALVFNLLPIVFEMTL). Residues 281-290 (VSSVLYYKCG) are Mitochondrial intermembrane-facing. A helical transmembrane segment spans residues 291 to 311 (AQFALVTLGTLGAYTAFTVAV). The Mitochondrial matrix portion of the chain corresponds to 312–382 (TRWRTRFRIE…TLAMLNFGQS (71 aa)). Glutathione is bound at residue 315 to 319 (RTRFR). Ser336 is subject to Phosphoserine. Tyr340 carries the phosphotyrosine modification. The residue at position 342 (Thr342) is a Phosphothreonine. At Lys350 the chain carries N6-acetyllysine. Position 378-381 (378-381 (NFGQ)) interacts with glutathione. The chain crosses the membrane as a helical span at residues 383 to 403 (AIFSVGLTAIMVLASQGIVAG). At 404-409 (ALTVGD) the chain is on the mitochondrial intermembrane side. A helical membrane pass occupies residues 410 to 430 (LVMVNGLLFQLSLPLNFLGTV). Gly428 contacts glutathione. Topologically, residues 431–752 (YRETRQALID…SVKGCGNCSC (322 aa)) are mitochondrial matrix. The 235-residue stretch at 472–706 (VAFDNVHFEY…SSSIYSEMWH (235 aa)) folds into the ABC transporter domain. Residues Tyr481 and 505 to 516 (GGSGSGKSTIVR) each bind ATP.

This sequence belongs to the ABC transporter superfamily. ABCB family. Heavy Metal importer (TC 3.A.1.210) subfamily. In terms of assembly, homodimer or heterodimer. Interacts with C10orf88/PAAT. Forms a complex with ABCB10 and FECH, where a dimeric FECH bridges ABCB7 and ABCB10 homodimers; this complex may be required for cellular iron homeostasis, mitochondrial function and heme biosynthesis. Interacts with FECH. Interacts with ATP5F1A. Interacts with COX4I1; this interaction allows the regulation of cellular iron homeostasis and cellular reactive oxygen species (ROS) levels in cardiomyocytes.

The protein resides in the mitochondrion inner membrane. The enzyme catalyses (glutathione)4[2Fe(III)-2S] cluster(in) + ATP + H2O = (glutathione)4[2Fe(III)-2S] cluster(out) + ADP + phosphate + H(+). Functionally, exports glutathione-coordinated iron-sulfur clusters such as [2Fe-2S]-(GS)4 cluster from the mitochondria to the cytosol in an ATP-dependent manner allowing the assembly of the cytosolic iron-sulfur (Fe/S) cluster-containing proteins and participates in iron homeostasis. Moreover, through a functional complex formed of ABCB7, FECH and ABCB10, also plays a role in the cellular iron homeostasis, mitochondrial function and heme biosynthesis. In cardiomyocytes, regulates cellular iron homeostasis and cellular reactive oxygen species (ROS) levels through its interaction with COX4I1. May also play a role in hematopoiesis. In Rattus norvegicus (Rat), this protein is Iron-sulfur clusters transporter ABCB7, mitochondrial.